We begin with the raw amino-acid sequence, 459 residues long: Pentatricopeptide repeat-containing protein At5g18390, mitochondrial (459 aa).

A mitochondrion-targeting transit peptide spans 1–7; the sequence is MLLLRRY. 9 PPR repeats span residues 110 to 144, 145 to 175, 181 to 215, 216 to 250, 251 to 285, 286 to 320, 321 to 355, 356 to 390, and 391 to 425; these read TSME…SLDI, SGET…VPKT, TVDV…GLKP, DKRT…GFNP, PARG…GFVP, DIQT…GLCV, DIDT…GHKP, FPSL…AHPP, and NRPV…GLVP.

It belongs to the PPR family. P subfamily.

It localises to the mitochondrion. The sequence is that of Pentatricopeptide repeat-containing protein At5g18390, mitochondrial from Arabidopsis thaliana (Mouse-ear cress).